The primary structure comprises 301 residues: Probable alpha-L-glutamate ligase 1 (301 aa).

An ATP-grasp domain is found at 104 to 287 (LQLLSRKGIG…VTEPIVEYIE (184 aa)). ATP is bound by residues Lys141, 178–179 (EY), Asp187, and 211–213 (RSN). Residues Asp248, Glu260, and Asn262 each contribute to the Mg(2+) site. Asp248, Glu260, and Asn262 together coordinate Mn(2+).

The protein belongs to the RimK family. It depends on Mg(2+) as a cofactor. Mn(2+) is required as a cofactor.

The protein is Probable alpha-L-glutamate ligase 1 of Shewanella sp. (strain ANA-3).